We begin with the raw amino-acid sequence, 481 residues long: Serine/threonine-protein kinase US3 (481 aa).

Positions 12 to 63 (RPDKRQEASVPPETNTAPAFPASTFYTPAEDAYLAPGPPETIHPSRPPSPGE) are disordered. Pro residues predominate over residues 47–61 (PGPPETIHPSRPPSP). The Protein kinase domain maps to 191–478 (FAIHGALIPG…AAELLRLPLF (288 aa)). Residues 197 to 205 (LIPGSEGCV) and Lys220 each bind ATP. The active-site Proton acceptor is the Asp305.

The protein belongs to the protein kinase superfamily. Ser/Thr protein kinase family. In terms of assembly, interacts with host LAT; this interaction prevents LAT activation of TRAF6. Phosphorylated by UL13; this phosphorylation regulates subsequent phosphorylation of UL31 and UL34 by US3. Autophosphorylated.

The protein localises to the host cytoplasm. It localises to the host nucleus. It catalyses the reaction L-seryl-[protein] + ATP = O-phospho-L-seryl-[protein] + ADP + H(+). It carries out the reaction L-threonyl-[protein] + ATP = O-phospho-L-threonyl-[protein] + ADP + H(+). Multifunctional serine/threonine kinase that plays a role in several processes including egress of virus particles from the nucleus, modulation of the actin cytoskeleton and inhibition of host immune response. Phosphorylates UL31 and UL34, two critical regulators of capsid budding from nucleus to endoplasmic reticulum, thereby facilitating virion egress. Modulates and redistributes host components of the nuclear envelope, including LMNA, emerin/EMD and the nuclear matrix protein MATR3. In turn, facilitates nuclear pore impairment and capsid release through impaired nuclear envelope. Phosphorylates envelope glycoprotein B (gB), probably to direct it to the cell surface. Promotes virus intracellular spread by restructuring host cell cytoskeleton. Blocks host apoptosis to extend cell survival and allow efficient viral replication. Promotes viral gene expression by phosphorylating host HDAC2 to reduce viral genome silencing. Strongly inhibits TCR-activated signal transduction in T-cells by reducing the ubiquitination of LAT and TRAF6, leading to a suboptimal activation of LAT. Subverts host antiviral innate immunity by inhibiting type I interferon production through hyperphosphorylation of beta-catenin/CTNNB1. In addition, phosphorylates the RNA sensor RIGI and the transcription factor IRF3 to prevent the RLR-mediated antiviral signaling pathway. Hyperphosphorylates host RELA and thereby dampens NF-kappa-B signaling. Acts as an immunoevasin partly responsible for inhibition of MR1 expression and antigen presentation in response to bacterial infection. This chain is Serine/threonine-protein kinase US3 (US3), found in Human herpesvirus 2 (strain HG52) (HHV-2).